Here is a 435-residue protein sequence, read N- to C-terminus: uncharacterized protein (435 aa).

11 helical membrane-spanning segments follow: residues 9–29 (IIVL…ITFA), 57–77 (VGLD…GNIM), 110–130 (TLFG…GGIM), 146–166 (AINV…VLIV), 176–196 (VAAL…ALMT), 226–246 (LPSL…VFTP), 280–300 (VVTS…SWAM), 321–341 (WVIL…MDIT), 343–363 (AILI…IDPV), 367–387 (IIMV…TILF), and 408–428 (FLAL…SLLL).

Belongs to the YiaN/YgiK family.

It is found in the cell inner membrane. This is an uncharacterized protein from Salmonella typhimurium (strain LT2 / SGSC1412 / ATCC 700720).